The chain runs to 376 residues: Pyrimidine monooxygenase RutA (376 aa).

Residues 61-62 (IK), Asn-127, Glu-136, 152-153 (RY), and Ser-202 contribute to the FMN site.

Belongs to the NtaA/SnaA/DszA monooxygenase family. RutA subfamily.

The enzyme catalyses uracil + FMNH2 + NADH + O2 = (Z)-3-ureidoacrylate + FMN + NAD(+) + H2O + H(+). It carries out the reaction thymine + FMNH2 + NADH + O2 = (Z)-2-methylureidoacrylate + FMN + NAD(+) + H2O + H(+). In terms of biological role, catalyzes the pyrimidine ring opening between N-3 and C-4 by an unusual flavin hydroperoxide-catalyzed mechanism, adding oxygen atoms in the process to yield ureidoacrylate peracid, that immediately reacts with FMN forming ureidoacrylate and FMN-N(5)-oxide. The FMN-N(5)-oxide reacts spontaneously with NADH to produce FMN. Requires the flavin reductase RutF to regenerate FMN in vivo. The chain is Pyrimidine monooxygenase RutA from Methylorubrum extorquens (strain CM4 / NCIMB 13688) (Methylobacterium extorquens).